The chain runs to 116 residues: Non-specific lipid-transfer protein 1 (116 aa).

The signal sequence occupies residues 1 to 25 (MARAQLVLVALVAALLLAAPHAAVA). Cystine bridges form between Cys-28/Cys-75, Cys-38/Cys-52, Cys-53/Cys-98, and Cys-73/Cys-112.

Belongs to the plant LTP family. As to expression, aleurone (external part) of the seeds.

Plant non-specific lipid-transfer proteins transfer phospholipids as well as galactolipids across membranes. May play a role in wax or cutin deposition in the cell walls of expanding epidermal cells and certain secretory tissues. This Oryza sativa subsp. indica (Rice) protein is Non-specific lipid-transfer protein 1 (LTP).